Consider the following 410-residue polypeptide: Peptidase T (410 aa).

His78 serves as a coordination point for Zn(2+). Asp80 is a catalytic residue. Asp140 lines the Zn(2+) pocket. The active-site Proton acceptor is the Glu174. Zn(2+) contacts are provided by Glu175, Asp197, and His379.

It belongs to the peptidase M20B family. It depends on Zn(2+) as a cofactor.

The protein resides in the cytoplasm. It carries out the reaction Release of the N-terminal residue from a tripeptide.. Cleaves the N-terminal amino acid of tripeptides. The polypeptide is Peptidase T (Vibrio cholerae serotype O1 (strain ATCC 39315 / El Tor Inaba N16961)).